The primary structure comprises 324 residues: 4-hydroxyphenylpyruvate 3-dimethylallyltransferase (324 aa).

Positions 160 and 281 each coordinate substrate.

The protein belongs to the aromatic prenyltransferase family. Monomer.

It carries out the reaction 3-(4-hydroxyphenyl)pyruvate + dimethylallyl diphosphate = 3-dimethylallyl-4-hydroxyphenylpyruvate + diphosphate. The protein operates within antibiotic biosynthesis. Functionally, magnesium-independent aromatic prenyltransferase that catalyzes the irreversible transfer of a dimethylallyl group to 4-hydroxyphenylpyruvate to produce the ring A structure in the clorobiocin biosynthesis pathway. Clorobiocin is an aminocoumarin family antibiotic. This is 4-hydroxyphenylpyruvate 3-dimethylallyltransferase from Streptomyces roseochromogenus subsp. oscitans.